The chain runs to 385 residues: Calcium/calmodulin-dependent protein kinase type 1D (385 aa).

The Protein kinase domain maps to 23–279; that stretch reads FEFKETLGTG…CEQAARHPWI (257 aa). ATP contacts are provided by residues 29–37 and Lys-52; that span reads LGTGAFSEV. Lys-113 participates in a covalent cross-link: Glycyl lysine isopeptide (Lys-Gly) (interchain with G-Cter in SUMO2). Phosphoserine is present on Ser-122. Catalysis depends on Asp-144, which acts as the Proton acceptor. Thr-180 is modified (phosphothreonine; by CaMKK1 and CaMKK2). The segment at 279 to 319 is autoinhibitory domain; the sequence is IAGDTALSKNIHESVSAQIRKNFAKSKWRQAFNATAVVRHM. Residues 299–320 form a calmodulin-binding region; sequence KNFAKSKWRQAFNATAVVRHMR. Positions 318 to 324 match the Nuclear export signal motif; it reads HMRRLQL. Positions 363 to 385 are disordered; that stretch reads VAGVGAERRPRPTTVTTGHTGSK. A compositionally biased stretch (polar residues) spans 375–385; that stretch reads TTVTTGHTGSK.

It belongs to the protein kinase superfamily. CAMK Ser/Thr protein kinase family. CaMK subfamily. Expressed ubiquitously with high levels in brain and low levels in kidney. Isoform 2 is highly expressed in brain compared to other tissues. In hematopoietic cell lines predominant expression was detected in T and EC cells.

The protein resides in the cytoplasm. Its subcellular location is the nucleus. It catalyses the reaction L-seryl-[protein] + ATP = O-phospho-L-seryl-[protein] + ADP + H(+). It carries out the reaction L-threonyl-[protein] + ATP = O-phospho-L-threonyl-[protein] + ADP + H(+). With respect to regulation, activated by Ca(2+)/calmodulin. Binding of calmodulin results in conformational change that relieves intrasteric autoinhibition and allows phosphorylation of Thr-180 within the activation loop by CaMKK1 or CaMKK2. Phosphorylation of Thr-180 results in several fold increase in total activity. Unlike CaMK4, may be unable to exhibit autonomous activity after Ca(2+)/calmodulin activation. In terms of biological role, calcium/calmodulin-dependent protein kinase that operates in the calcium-triggered CaMKK-CaMK1 signaling cascade and, upon calcium influx, activates CREB-dependent gene transcription, regulates calcium-mediated granulocyte function and respiratory burst and promotes basal dendritic growth of hippocampal neurons. In neutrophil cells, required for cytokine-induced proliferative responses and activation of the respiratory burst. Activates the transcription factor CREB1 in hippocampal neuron nuclei. May play a role in apoptosis of erythroleukemia cells. In vitro, phosphorylates transcription factor CREM isoform Beta. Isoform 1 but not isoform 2 activates CREB1. In Mus musculus (Mouse), this protein is Calcium/calmodulin-dependent protein kinase type 1D (Camk1d).